The chain runs to 608 residues: tRNA (guanine(37)-N(1))-methyltransferase 1 (608 aa).

Positions 207–229 are disordered; that stretch reads SRPKKKKRRKEEERSEGKKRTGK. Positions 216-229 are enriched in basic and acidic residues; sequence KEEERSEGKKRTGK. S-adenosyl-L-methionine contacts are provided by residues arginine 425, 463-464, 491-492, and asparagine 514; these read DL and DG.

It belongs to the class I-like SAM-binding methyltransferase superfamily. TRM5/TYW2 family. As to quaternary structure, monomer.

Its subcellular location is the mitochondrion matrix. The protein localises to the nucleus. The protein resides in the cytoplasm. It catalyses the reaction guanosine(37) in tRNA + S-adenosyl-L-methionine = N(1)-methylguanosine(37) in tRNA + S-adenosyl-L-homocysteine + H(+). In terms of biological role, specifically methylates the N1 position of guanosine-37 in various cytoplasmic and mitochondrial tRNAs. Methylation is not dependent on the nature of the nucleoside 5' of the target nucleoside. This is the first step in the biosynthesis of wybutosine (yW), a modified base adjacent to the anticodon of tRNAs and required for accurate decoding. This chain is tRNA (guanine(37)-N(1))-methyltransferase 1, found in Vitis vinifera (Grape).